Reading from the N-terminus, the 142-residue chain is Putative pre-16S rRNA nuclease (142 aa).

It belongs to the YqgF nuclease family.

The protein localises to the cytoplasm. Functionally, could be a nuclease involved in processing of the 5'-end of pre-16S rRNA. The chain is Putative pre-16S rRNA nuclease from Staphylococcus epidermidis (strain ATCC 35984 / DSM 28319 / BCRC 17069 / CCUG 31568 / BM 3577 / RP62A).